The chain runs to 410 residues: Peptidase T (410 aa).

His79 is a binding site for Zn(2+). Asp81 is a catalytic residue. Asp142 contributes to the Zn(2+) binding site. The active-site Proton acceptor is the Glu176. Glu177, Asp199, and His381 together coordinate Zn(2+).

Belongs to the peptidase M20B family. Zn(2+) serves as cofactor.

It localises to the cytoplasm. It catalyses the reaction Release of the N-terminal residue from a tripeptide.. Functionally, cleaves the N-terminal amino acid of tripeptides. The polypeptide is Peptidase T (Bacillus thuringiensis subsp. konkukian (strain 97-27)).